The following is a 295-amino-acid chain: 4-hydroxy-3-methylbut-2-enyl diphosphate reductase (295 aa).

Cys12 provides a ligand contact to [4Fe-4S] cluster. Residues His43 and His81 each coordinate (2E)-4-hydroxy-3-methylbut-2-enyl diphosphate. Dimethylallyl diphosphate is bound by residues His43 and His81. Isopentenyl diphosphate contacts are provided by His43 and His81. A [4Fe-4S] cluster-binding site is contributed by Cys103. A (2E)-4-hydroxy-3-methylbut-2-enyl diphosphate-binding site is contributed by His131. His131 is a dimethylallyl diphosphate binding site. His131 contacts isopentenyl diphosphate. Glu133 serves as the catalytic Proton donor. Thr171 contacts (2E)-4-hydroxy-3-methylbut-2-enyl diphosphate. Cys199 contacts [4Fe-4S] cluster. Residues Ser227, Asn229, and Ser272 each contribute to the (2E)-4-hydroxy-3-methylbut-2-enyl diphosphate site. Dimethylallyl diphosphate contacts are provided by Ser227, Asn229, and Ser272. Ser227, Asn229, and Ser272 together coordinate isopentenyl diphosphate.

It belongs to the IspH family. It depends on [4Fe-4S] cluster as a cofactor.

It carries out the reaction isopentenyl diphosphate + 2 oxidized [2Fe-2S]-[ferredoxin] + H2O = (2E)-4-hydroxy-3-methylbut-2-enyl diphosphate + 2 reduced [2Fe-2S]-[ferredoxin] + 2 H(+). It catalyses the reaction dimethylallyl diphosphate + 2 oxidized [2Fe-2S]-[ferredoxin] + H2O = (2E)-4-hydroxy-3-methylbut-2-enyl diphosphate + 2 reduced [2Fe-2S]-[ferredoxin] + 2 H(+). Its pathway is isoprenoid biosynthesis; dimethylallyl diphosphate biosynthesis; dimethylallyl diphosphate from (2E)-4-hydroxy-3-methylbutenyl diphosphate: step 1/1. It functions in the pathway isoprenoid biosynthesis; isopentenyl diphosphate biosynthesis via DXP pathway; isopentenyl diphosphate from 1-deoxy-D-xylulose 5-phosphate: step 6/6. Its function is as follows. Catalyzes the conversion of 1-hydroxy-2-methyl-2-(E)-butenyl 4-diphosphate (HMBPP) into a mixture of isopentenyl diphosphate (IPP) and dimethylallyl diphosphate (DMAPP). Acts in the terminal step of the DOXP/MEP pathway for isoprenoid precursor biosynthesis. This Symbiobacterium thermophilum (strain DSM 24528 / JCM 14929 / IAM 14863 / T) protein is 4-hydroxy-3-methylbut-2-enyl diphosphate reductase.